The following is a 395-amino-acid chain: Flavohemoprotein (395 aa).

The Globin domain maps to 1–136 (MLDQQTIATI…LANVFIQRES (136 aa)). Histidine 85 is a binding site for heme b. Catalysis depends on charge relay system residues tyrosine 95 and glutamate 135. The segment at 147 to 395 (GGWHGIRPFR…YECFGPHKVI (249 aa)) is reductase. The FAD-binding FR-type domain occupies 150-255 (HGIRPFRIVA…AAPHGDFYLE (106 aa)). Residues tyrosine 188 and 204 to 207 (RQYS) each bind FAD. 268 to 273 (GVGQTP) contacts NADP(+). An FAD-binding site is contributed by 388–391 (CFGP).

This sequence belongs to the globin family. Two-domain flavohemoproteins subfamily. The protein in the C-terminal section; belongs to the flavoprotein pyridine nucleotide cytochrome reductase family. It depends on heme b as a cofactor. The cofactor is FAD.

The protein localises to the cytoplasm. The catalysed reaction is 2 nitric oxide + NADPH + 2 O2 = 2 nitrate + NADP(+) + H(+). The enzyme catalyses 2 nitric oxide + NADH + 2 O2 = 2 nitrate + NAD(+) + H(+). Functionally, is involved in NO detoxification in an aerobic process, termed nitric oxide dioxygenase (NOD) reaction that utilizes O(2) and NAD(P)H to convert NO to nitrate, which protects the bacterium from various noxious nitrogen compounds. Therefore, plays a central role in the inducible response to nitrosative stress. This chain is Flavohemoprotein (hmp), found in Dickeya dadantii (strain 3937) (Erwinia chrysanthemi (strain 3937)).